A 288-amino-acid chain; its full sequence is NAD kinase (288 aa).

Asp-70 serves as the catalytic Proton acceptor. NAD(+) is bound by residues 70-71, 144-145, Arg-155, Lys-172, Asp-174, 185-190, and Gln-245; these read DG, ND, and TGYSLS.

Belongs to the NAD kinase family. A divalent metal cation is required as a cofactor.

It localises to the cytoplasm. The catalysed reaction is NAD(+) + ATP = ADP + NADP(+) + H(+). Its function is as follows. Involved in the regulation of the intracellular balance of NAD and NADP, and is a key enzyme in the biosynthesis of NADP. Catalyzes specifically the phosphorylation on 2'-hydroxyl of the adenosine moiety of NAD to yield NADP. This chain is NAD kinase, found in Citrifermentans bemidjiense (strain ATCC BAA-1014 / DSM 16622 / JCM 12645 / Bem) (Geobacter bemidjiensis).